A 780-amino-acid polypeptide reads, in one-letter code: Exocyst complex component 3-like protein (780 aa).

Belongs to the SEC6 family.

It is found in the cytoplasmic vesicle. It localises to the secretory vesicle. As part of the exocyst, may play a role in regulated exocytosis. The protein is Exocyst complex component 3-like protein (exoc3l1) of Danio rerio (Zebrafish).